Here is a 216-residue protein sequence, read N- to C-terminus: Large ribosomal subunit protein uL3 (216 aa).

The segment at 137 to 158 is disordered; sequence GASHGAHKNHRKPGSIGGASTP.

The protein belongs to the universal ribosomal protein uL3 family. Part of the 50S ribosomal subunit. Forms a cluster with proteins L14 and L19.

In terms of biological role, one of the primary rRNA binding proteins, it binds directly near the 3'-end of the 23S rRNA, where it nucleates assembly of the 50S subunit. The chain is Large ribosomal subunit protein uL3 from Arthrobacter sp. (strain FB24).